The primary structure comprises 119 residues: MARVKGGVVSRKRRKRILKLAKGYYGAKHILFRTAKEQVMNSYYYAYRDRRQKKRDFRKLWITRINAAARMNGLSYSQLMHGLKLAEIEVNRKMLADLAVADAAAFTALADAAKAKLGK.

This sequence belongs to the bacterial ribosomal protein bL20 family.

Functionally, binds directly to 23S ribosomal RNA and is necessary for the in vitro assembly process of the 50S ribosomal subunit. It is not involved in the protein synthesizing functions of that subunit. This chain is Large ribosomal subunit protein bL20, found in Streptococcus pyogenes serotype M1.